A 176-amino-acid polypeptide reads, in one-letter code: Inorganic pyrophosphatase (176 aa).

Residues lysine 30, arginine 44, and tyrosine 56 each coordinate substrate. 3 residues coordinate Mg(2+): aspartate 66, aspartate 71, and aspartate 103. Tyrosine 142 is a binding site for substrate.

This sequence belongs to the PPase family. In terms of assembly, homohexamer. Mg(2+) is required as a cofactor.

The protein localises to the cytoplasm. The catalysed reaction is diphosphate + H2O = 2 phosphate + H(+). Catalyzes the hydrolysis of inorganic pyrophosphate (PPi) forming two phosphate ions. The sequence is that of Inorganic pyrophosphatase from Vibrio cholerae serotype O1 (strain ATCC 39315 / El Tor Inaba N16961).